The sequence spans 328 residues: P2Y purinoceptor 3 (328 aa).

Over 1–22 (MSMANFTAGRNSCTFQEEFKQV) the chain is Extracellular. Residue Asn-5 is glycosylated (N-linked (GlcNAc...) asparagine). Residues 23–43 (LLPLVYSVVFLLGLPLNAVVI) form a helical membrane-spanning segment. Residues 44–57 (GQIWLARKALTRTT) are Cytoplasmic-facing. A helical transmembrane segment spans residues 58-78 (IYMLNLATADLLYVCSLPLLI). Residues 79-96 (YNYTQKDYWPFGDFTCKF) lie on the Extracellular side of the membrane. A disulfide bridge links Cys-94 with Cys-172. The chain crosses the membrane as a helical span at residues 97–117 (VRFQFYTNLHGSILFLTCISV). Topologically, residues 118 to 139 (QRYMGICHPLASWHKKKGKKLT) are cytoplasmic. The helical transmembrane segment at 140–160 (WLVCAAVWFIVIAQCLPTFVF) threads the bilayer. The Extracellular portion of the chain corresponds to 161 to 189 (ASTGTQRNRTVCYDLSPPDRSASYFPYGI). The chain crosses the membrane as a helical span at residues 190-210 (TLTITGFLLPFAAILACYCSM). Residues 211 to 231 (ARILCQKDELIGLAVHKKKDK) lie on the Cytoplasmic side of the membrane. A helical transmembrane segment spans residues 232–252 (AVRMIIIVVIVFSISFFPFHL). Residues 253–275 (TKTIYLIVRSSPTLPCPTLQAFA) are Extracellular-facing. A helical transmembrane segment spans residues 276-298 (IAYKCTRPFASMNSVLDPILFYF). Over 299 to 323 (TQRKFRESTRYLLDKMSSKWRHDHC) the chain is Cytoplasmic.

This sequence belongs to the G-protein coupled receptor 1 family.

The protein resides in the cell membrane. Functionally, receptor for extracellular UDP &gt; ADP = UTP. The activity of this receptor is mediated by G proteins which activate a phosphatidylinositol-calcium second messenger system. The chain is P2Y purinoceptor 3 (P2RY3) from Meleagris gallopavo (Wild turkey).